Consider the following 130-residue polypeptide: MSMQDPIADMLTRIRNGQAANKVAVTMPSAKLKVAIANVLKEEGFIEDFKVEGDTKPELELTLKYFQGKAVVESIQRVSRPGLRIYKKKDELPKVMAGLGIAVVSTSKGVMTDRAARQAGLGGEIICYVA.

This sequence belongs to the universal ribosomal protein uS8 family. Part of the 30S ribosomal subunit. Contacts proteins S5 and S12.

In terms of biological role, one of the primary rRNA binding proteins, it binds directly to 16S rRNA central domain where it helps coordinate assembly of the platform of the 30S subunit. This is Small ribosomal subunit protein uS8 from Enterobacter sp. (strain 638).